The following is a 232-amino-acid chain: Triosephosphate isomerase (232 aa).

6 to 8 (NFK) is a substrate binding site. Catalysis depends on H86, which acts as the Electrophile. Residue E155 is the Proton acceptor of the active site. Substrate is bound by residues G161 and S191.

The protein belongs to the triosephosphate isomerase family. Homodimer.

The protein resides in the cytoplasm. The enzyme catalyses D-glyceraldehyde 3-phosphate = dihydroxyacetone phosphate. The protein operates within carbohydrate biosynthesis; gluconeogenesis. Its pathway is carbohydrate degradation; glycolysis; D-glyceraldehyde 3-phosphate from glycerone phosphate: step 1/1. In terms of biological role, involved in the gluconeogenesis. Catalyzes stereospecifically the conversion of dihydroxyacetone phosphate (DHAP) to D-glyceraldehyde-3-phosphate (G3P). The polypeptide is Triosephosphate isomerase (Nitratiruptor sp. (strain SB155-2)).